The sequence spans 191 residues: Protein GrpE (191 aa).

Positions 1–13 (MSEKKNKKEKLAE) are enriched in basic and acidic residues. Residues 1–40 (MSEKKNKKEKLAEEIEQEELNSLDESVETVEEEATEETLT) are disordered. A compositionally biased stretch (acidic residues) spans 14-40 (EIEQEELNSLDESVETVEEEATEETLT).

Belongs to the GrpE family. As to quaternary structure, homodimer.

It is found in the cytoplasm. Its function is as follows. Participates actively in the response to hyperosmotic and heat shock by preventing the aggregation of stress-denatured proteins, in association with DnaK and GrpE. It is the nucleotide exchange factor for DnaK and may function as a thermosensor. Unfolded proteins bind initially to DnaJ; upon interaction with the DnaJ-bound protein, DnaK hydrolyzes its bound ATP, resulting in the formation of a stable complex. GrpE releases ADP from DnaK; ATP binding to DnaK triggers the release of the substrate protein, thus completing the reaction cycle. Several rounds of ATP-dependent interactions between DnaJ, DnaK and GrpE are required for fully efficient folding. In Listeria innocua serovar 6a (strain ATCC BAA-680 / CLIP 11262), this protein is Protein GrpE.